Consider the following 308-residue polypeptide: Methionyl-tRNA formyltransferase (308 aa).

109–112 (SLLP) serves as a coordination point for (6S)-5,6,7,8-tetrahydrofolate.

This sequence belongs to the Fmt family.

It carries out the reaction L-methionyl-tRNA(fMet) + (6R)-10-formyltetrahydrofolate = N-formyl-L-methionyl-tRNA(fMet) + (6S)-5,6,7,8-tetrahydrofolate + H(+). In terms of biological role, attaches a formyl group to the free amino group of methionyl-tRNA(fMet). The formyl group appears to play a dual role in the initiator identity of N-formylmethionyl-tRNA by promoting its recognition by IF2 and preventing the misappropriation of this tRNA by the elongation apparatus. The sequence is that of Methionyl-tRNA formyltransferase from Salinispora tropica (strain ATCC BAA-916 / DSM 44818 / JCM 13857 / NBRC 105044 / CNB-440).